The primary structure comprises 307 residues: Transcription initiation factor IIB 5 (307 aa).

A TFIIB-type zinc finger spans residues 19–47; the sequence is TTEPCPECGGPVRTNSAETVCADCGLIID. 4 residues coordinate Zn(2+): cysteine 23, cysteine 26, cysteine 39, and cysteine 42. Composition is skewed to basic and acidic residues over residues 54–66 and 107–121; these read GPEW…DTAK and MRRE…STKE. The tract at residues 54-121 is disordered; sequence GPEWHRDDAD…SRGRWRSTKE (68 aa). 2 repeat units span residues 129–212 and 223–304.

The protein belongs to the TFIIB family.

Functionally, stabilizes TBP binding to an archaeal box-A promoter. Also responsible for recruiting RNA polymerase II to the pre-initiation complex (DNA-TBP-TFIIB). The polypeptide is Transcription initiation factor IIB 5 (Halobacterium salinarum (strain ATCC 700922 / JCM 11081 / NRC-1) (Halobacterium halobium)).